The chain runs to 191 residues: Thymidylate kinase (191 aa).

7 to 14 (GVDGVGKS) lines the ATP pocket.

Belongs to the thymidylate kinase family.

The enzyme catalyses dTMP + ATP = dTDP + ADP. Phosphorylation of dTMP to form dTDP in both de novo and salvage pathways of dTTP synthesis. The sequence is that of Thymidylate kinase from Helicobacter pylori (strain HPAG1).